The chain runs to 466 residues: Asparagine--tRNA ligase (466 aa).

Belongs to the class-II aminoacyl-tRNA synthetase family. As to quaternary structure, homodimer.

Its subcellular location is the cytoplasm. The catalysed reaction is tRNA(Asn) + L-asparagine + ATP = L-asparaginyl-tRNA(Asn) + AMP + diphosphate + H(+). The polypeptide is Asparagine--tRNA ligase (Sodalis glossinidius (strain morsitans)).